A 310-amino-acid chain; its full sequence is Ribosomal RNA small subunit methyltransferase H (310 aa).

S-adenosyl-L-methionine is bound by residues 32–34 (GGH), aspartate 52, phenylalanine 79, aspartate 100, and glutamine 107.

It belongs to the methyltransferase superfamily. RsmH family.

The protein resides in the cytoplasm. The enzyme catalyses cytidine(1402) in 16S rRNA + S-adenosyl-L-methionine = N(4)-methylcytidine(1402) in 16S rRNA + S-adenosyl-L-homocysteine + H(+). Functionally, specifically methylates the N4 position of cytidine in position 1402 (C1402) of 16S rRNA. This is Ribosomal RNA small subunit methyltransferase H from Bacillus anthracis (strain A0248).